The chain runs to 198 residues: Recombination protein RecR (198 aa).

The C4-type zinc-finger motif lies at C57–C72. The region spanning S80–P175 is the Toprim domain.

It belongs to the RecR family.

In terms of biological role, may play a role in DNA repair. It seems to be involved in an RecBC-independent recombinational process of DNA repair. It may act with RecF and RecO. The chain is Recombination protein RecR from Bacillus cytotoxicus (strain DSM 22905 / CIP 110041 / 391-98 / NVH 391-98).